A 283-amino-acid polypeptide reads, in one-letter code: Small ribosomal subunit protein uS3 (283 aa).

One can recognise a KH type-2 domain in the interval 39–107; the sequence is VRAYLKTKLK…PVHVNIEEIR (69 aa). The disordered stretch occupies residues 219 to 283; the sequence is ASDDDKKRRG…AAVSAEKAGE (65 aa). The segment covering 221–236 has biased composition (basic and acidic residues); the sequence is DDDKKRRGPRRDDGKP. Residues 237–260 show a composition bias toward low complexity; that stretch reads SGRPRAPRPEGQPGAAAPGSAPAA.

The protein belongs to the universal ribosomal protein uS3 family. In terms of assembly, part of the 30S ribosomal subunit. Forms a tight complex with proteins S10 and S14.

Binds the lower part of the 30S subunit head. Binds mRNA in the 70S ribosome, positioning it for translation. This Janthinobacterium sp. (strain Marseille) (Minibacterium massiliensis) protein is Small ribosomal subunit protein uS3.